Here is a 172-residue protein sequence, read N- to C-terminus: Ribosome maturation factor RimM (172 aa).

A PRC barrel domain is found at 94 to 167; the sequence is ENEFYLFQLK…FIKVELLPGM (74 aa).

This sequence belongs to the RimM family. As to quaternary structure, binds ribosomal protein uS19.

Its subcellular location is the cytoplasm. In terms of biological role, an accessory protein needed during the final step in the assembly of 30S ribosomal subunit, possibly for assembly of the head region. Essential for efficient processing of 16S rRNA. May be needed both before and after RbfA during the maturation of 16S rRNA. It has affinity for free ribosomal 30S subunits but not for 70S ribosomes. This chain is Ribosome maturation factor RimM, found in Carboxydothermus hydrogenoformans (strain ATCC BAA-161 / DSM 6008 / Z-2901).